Consider the following 372-residue polypeptide: MSNKDIRVVVGMSGGVDSSVTAYLLKEQGYDVIGIFMKNWDDTDENGVCTATEDYNDVIAVCNQIGIPYYAVNFEEQYWDKVFTYFLDEYKKGRTPNPDVMCNKEIKFKAFLEHALKLGADYVATGHYARIRRHDDGHVEMLRGVDNNKDQTYFLNQLSQEQLSKVMFPIGDIEKSEVRRIAEEQNLATAKKKDSTGICFIGERNFKEFLSHYLPAQSGEMLTLNGKKMGQHSGLMYYTIGQRHGLGIGGDGDPWFVVGKNLNDNVLYVEQGFHHDALYSDYLIASDYSFVNPSEIDLEKGFECTAKFRYRQKDTKVYVQRENENSIRVTFAEPVRAITPGQAVVFYNQEVCLGGATIDDVYKNEGQLSYVV.

Residues G11–S18 and M37 each bind ATP. An interaction with target base in tRNA region spans residues N97–D99. The active-site Nucleophile is C102. A disulfide bridge links C102 with C199. G126 lines the ATP pocket. Residues K149–Q151 are interaction with tRNA. The Cysteine persulfide intermediate role is filled by C199. The segment at R309–Y310 is interaction with tRNA.

It belongs to the MnmA/TRMU family.

The protein resides in the cytoplasm. The enzyme catalyses S-sulfanyl-L-cysteinyl-[protein] + uridine(34) in tRNA + AH2 + ATP = 2-thiouridine(34) in tRNA + L-cysteinyl-[protein] + A + AMP + diphosphate + H(+). Catalyzes the 2-thiolation of uridine at the wobble position (U34) of tRNA, leading to the formation of s(2)U34. The protein is tRNA-specific 2-thiouridylase MnmA of Staphylococcus epidermidis (strain ATCC 35984 / DSM 28319 / BCRC 17069 / CCUG 31568 / BM 3577 / RP62A).